A 417-amino-acid chain; its full sequence is Phosphoribosylamine--glycine ligase (417 aa).

In terms of domain architecture, ATP-grasp spans 107–313 (KQIMAKYEIP…FLEIIEATLE (207 aa)). 133 to 194 (LKETWYPVVI…EEMLYGKEAS (62 aa)) contacts ATP. Mg(2+)-binding residues include Glu-283 and Asn-285.

Belongs to the GARS family. The cofactor is Mg(2+). Mn(2+) serves as cofactor.

The enzyme catalyses 5-phospho-beta-D-ribosylamine + glycine + ATP = N(1)-(5-phospho-beta-D-ribosyl)glycinamide + ADP + phosphate + H(+). The protein operates within purine metabolism; IMP biosynthesis via de novo pathway; N(1)-(5-phospho-D-ribosyl)glycinamide from 5-phospho-alpha-D-ribose 1-diphosphate: step 2/2. In Caldanaerobacter subterraneus subsp. tengcongensis (strain DSM 15242 / JCM 11007 / NBRC 100824 / MB4) (Thermoanaerobacter tengcongensis), this protein is Phosphoribosylamine--glycine ligase.